We begin with the raw amino-acid sequence, 306 residues long: Latrophilin receptor-like protein A (306 aa).

Over 1-15 (MPSQLLNTVLSYLTD) the chain is Extracellular. Residues 16-36 (ILLSLSIVGSFLTIFTFMLYP) traverse the membrane as a helical segment. Topologically, residues 37–41 (KLRSY) are cytoplasmic. Residues 42-62 (PIKLIIYLCMSIVFSLFFFEI) form a helical membrane-spanning segment. Topologically, residues 63–70 (SFRSSNSL) are extracellular. Residues 71 to 91 (FCIPAAILVHYFFLANFFWTF) traverse the membrane as a helical segment. Residues 92–113 (SVSFNFFQMIVKRNRDSEFYER) are Cytoplasmic-facing. A helical membrane pass occupies residues 114–134 (YYHLISWGIPFIIIIFCAAFK). Residues 135-152 (KYVDRGGFCYLEDQYSVY) are Extracellular-facing. Residues 153–173 (FGFFMPGVIIVCSNICIYVFV) traverse the membrane as a helical segment. The Cytoplasmic segment spans residues 174 to 196 (AKEIYKTLRHTPTQKRQTVKEFR). The helical transmembrane segment at 197 to 217 (VYFSIFVSIGSSWIFGFIYMF) threads the bilayer. Over 218–222 (SDSNS) the chain is Extracellular. Residues 223–243 (IIGYIFLILFSISTSLQGFFI) traverse the membrane as a helical segment. At 244-306 (FISYCLNYKV…TTTTTNVYSA (63 aa)) the chain is on the cytoplasmic side. Residues 279–306 (TTQSGPTGTTDSSSTMTSTTTTTNVYSA) form a disordered region.

This sequence belongs to the G-protein coupled receptor 2 family. LN-TM7 subfamily.

It localises to the membrane. The polypeptide is Latrophilin receptor-like protein A (lrlA) (Dictyostelium discoideum (Social amoeba)).